The primary structure comprises 483 residues: Regulatory protein ViaA (483 aa).

Belongs to the ViaA family. As to quaternary structure, homodimer. Interacts with RavA.

Its subcellular location is the cytoplasm. Functionally, component of the RavA-ViaA chaperone complex, which may act on the membrane to optimize the function of some of the respiratory chains. ViaA stimulates the ATPase activity of RavA. The polypeptide is Regulatory protein ViaA (Shigella boydii serotype 18 (strain CDC 3083-94 / BS512)).